Reading from the N-terminus, the 134-residue chain is Protein Turandot E (134 aa).

The signal sequence occupies residues Met-1–Gly-38.

Belongs to the Turandot family.

It is found in the secreted. In terms of biological role, a humoral factor that may play a role in stress tolerance. This Drosophila yakuba (Fruit fly) protein is Protein Turandot E.